The primary structure comprises 94 residues: MARRCELTGTGVLTGNNVSHAQNKSRRRFLPNLCDVTLASEKLGRGFKLRVAAKALRSVDHVGGLDVYLLKARDEKLSDKALKIKRDLKKAMAA.

The protein belongs to the bacterial ribosomal protein bL28 family.

The polypeptide is Large ribosomal subunit protein bL28 (Maricaulis maris (strain MCS10) (Caulobacter maris)).